Consider the following 1729-residue polypeptide: 1,3-beta-glucan synthase component bgs1 (1729 aa).

S23 bears the Phosphoserine mark. Transmembrane regions (helical) follow at residues 378–398 (WTACGLAGAIASFITLAAVVF), 416–436 (SMLLLISTLLLNIAPVVFIFA), 448–468 (LVVGIVHFFFSLVCVVYYSIT), 503–523 (FVSWCLWITVLVAKFLESYFF), 546–566 (YILGAGLCKAQPKILLSLLYL), and 577–597 (YLWYILISTIYSLAYAFCLGI). Residues S784 and S788 each carry the phosphoserine modification. The next 8 membrane-spanning stretches (helical) occupy residues 1180–1200 (MVIMFSLQLLMLVIINLGAMY), 1237–1257 (ILSIFIVFGIAFVPLAVCELG), 1337–1357 (MLLFGSITAWLPHYIYFWITL), 1440–1460 (YGEILGPLGTLFFTCIPFLFI), 1484–1504 (VAPLVLSAIIAFFFFCLGIML), 1515–1535 (YGVYLAGVAHFLFVCVDVVVF), 1550–1572 (LLGFVAIISIHRFAHKFFIICFL), and 1678–1698 (ATLYFSLFIAFFVLLILPFVF).

Belongs to the glycosyltransferase 48 family. As to quaternary structure, component of the 1,3-beta-glucan synthase (GS) complex, composed of at least the alternate catalytic subunits bgs1, bgs2, bgs3, and bgs4, and a regulatory subunit chr4.

It localises to the cell membrane. Its subcellular location is the cell septum. The catalysed reaction is [(1-&gt;3)-beta-D-glucosyl](n) + UDP-alpha-D-glucose = [(1-&gt;3)-beta-D-glucosyl](n+1) + UDP + H(+). Functionally, alternate catalytic subunit of the 1,3-beta-glucan synthase (GS) complex. Synthesizes 1,3-beta-glucan, a major structural component of the fungal cell wall. Required for the assembly of the division septum and maintenance of cell polarity. The chain is 1,3-beta-glucan synthase component bgs1 (bgs1) from Schizosaccharomyces pombe (strain 972 / ATCC 24843) (Fission yeast).